We begin with the raw amino-acid sequence, 331 residues long: Adenosine deaminase (331 aa).

Histidine 12 and histidine 14 together coordinate Zn(2+). The substrate site is built by histidine 14, aspartate 16, and glycine 170. Zn(2+) is bound at residue histidine 197. Glutamate 200 serves as the catalytic Proton donor. Aspartate 278 is a binding site for Zn(2+). Aspartate 279 contributes to the substrate binding site.

This sequence belongs to the metallo-dependent hydrolases superfamily. Adenosine and AMP deaminases family. Adenosine deaminase subfamily. Zn(2+) serves as cofactor.

It catalyses the reaction adenosine + H2O + H(+) = inosine + NH4(+). It carries out the reaction 2'-deoxyadenosine + H2O + H(+) = 2'-deoxyinosine + NH4(+). Its function is as follows. Catalyzes the hydrolytic deamination of adenosine and 2-deoxyadenosine. The protein is Adenosine deaminase of Shewanella sp. (strain MR-7).